The following is a 220-amino-acid chain: NADH-quinone oxidoreductase subunit I (220 aa).

4Fe-4S ferredoxin-type domains are found at residues 71–102 (LQRLLDSGSERCIGCGLCEKICTSNCIRIITH) and 112–141 (DSYTINLGRCIYCGLCAEVCPELAIVMGNR). Residues Cys-82, Cys-85, Cys-88, Cys-92, Cys-121, Cys-124, Cys-127, and Cys-131 each contribute to the [4Fe-4S] cluster site. Residues 187 to 220 (MQATPLDYVQEPSKEESKEESPTSPESHKGDENV) form a disordered region. The span at 198-220 (PSKEESKEESPTSPESHKGDENV) shows a compositional bias: basic and acidic residues.

It belongs to the complex I 23 kDa subunit family. NDH-1 is composed of 14 different subunits. Subunits NuoA, H, J, K, L, M, N constitute the membrane sector of the complex. The cofactor is [4Fe-4S] cluster.

It is found in the cell inner membrane. The catalysed reaction is a quinone + NADH + 5 H(+)(in) = a quinol + NAD(+) + 4 H(+)(out). NDH-1 shuttles electrons from NADH, via FMN and iron-sulfur (Fe-S) centers, to quinones in the respiratory chain. The immediate electron acceptor for the enzyme in this species is believed to be ubiquinone. Couples the redox reaction to proton translocation (for every two electrons transferred, four hydrogen ions are translocated across the cytoplasmic membrane), and thus conserves the redox energy in a proton gradient. This chain is NADH-quinone oxidoreductase subunit I, found in Helicobacter pylori (strain J99 / ATCC 700824) (Campylobacter pylori J99).